Reading from the N-terminus, the 278-residue chain is DNA adenine methylase (278 aa).

Trp10, Lys14, Asp54, and Asp181 together coordinate S-adenosyl-L-methionine.

The protein belongs to the N(4)/N(6)-methyltransferase family.

It catalyses the reaction a 2'-deoxyadenosine in DNA + S-adenosyl-L-methionine = an N(6)-methyl-2'-deoxyadenosine in DNA + S-adenosyl-L-homocysteine + H(+). Its function is as follows. An alpha subtype methylase, recognizes the double-stranded sequence 5'-GATC-3' and methylates A-2. May be involved in methyl-directed DNA mismatch repair, initiation of chromosome replication and gene expression. In Salmonella typhimurium, this protein is DNA adenine methylase (dam).